A 221-amino-acid polypeptide reads, in one-letter code: Ras-related protein Rab-27A (221 aa).

An N-acetylserine modification is found at Ser-2. Phosphoserine is present on Ser-2. GTP is bound at residue 16–24; sequence GDSGVGKTS. The Effector region signature appears at 38–46; that stretch reads FITTVGIDF. GTP-binding positions include 74 to 78, 133 to 136, and 163 to 165; these read DTAGQ, NKSD, and SAA. A disulfide bridge connects residues Cys-123 and Cys-188. 2 S-geranylgeranyl cysteine lipidation sites follow: Cys-219 and Cys-221. Cys-221 bears the Cysteine methyl ester mark.

This sequence belongs to the small GTPase superfamily. Rab family. As to quaternary structure, binds SYTL1, SYTL2, SLAC2B, MYRIP, SYTL3, SYTL4, SYTL5 and MLPH. Interacts with UNC13D. Interacts with RPH3A and RPH3A. Does not interact with the BLOC-3 complex (heterodimer of HPS1 and HPS4). Interacts (GDP-bound form preferentially) with DENND10. As to expression, detected in melanocytes. Expressed abundantly in the stomach and is predominantly localized at the apical region of gastric-surface mucus cells. Also expressed in the thymus and lung.

The protein localises to the membrane. The protein resides in the melanosome. It is found in the late endosome. Its subcellular location is the lysosome. It carries out the reaction GTP + H2O = GDP + phosphate + H(+). Regulated by guanine nucleotide exchange factors (GEFs) which promote the exchange of bound GDP for free GTP, GTPase activating proteins (GAPs) which increase the GTP hydrolysis activity, and GDP dissociation inhibitors which inhibit the dissociation of the nucleotide from the GTPase. Activated by GEFs such as DENND10. Its function is as follows. Small GTPase which cycles between active GTP-bound and inactive GDP-bound states. In its active state, binds to a variety of effector proteins to regulate homeostasis of late endocytic pathway, including endosomal positioning, maturation and secretion. Plays a role in cytotoxic granule exocytosis in lymphocytes. Required for both granule maturation and granule docking and priming at the immunologic synapse. This is Ras-related protein Rab-27A (Rab27a) from Mus musculus (Mouse).